We begin with the raw amino-acid sequence, 697 residues long: Ion-translocating oxidoreductase complex subunit C (697 aa).

2 4Fe-4S ferredoxin-type domains span residues 366–397 and 407–436; these read AEMG…QQLY and KARN…VQYY. [4Fe-4S] cluster contacts are provided by Cys-377, Cys-380, Cys-383, Cys-387, Cys-416, Cys-419, Cys-422, and Cys-426. The segment at 576-674 is disordered; sequence AQLESEPVKS…APEEDPRKAA (99 aa). A compositionally biased stretch (basic and acidic residues) spans 581 to 596; sequence EPVKSESEAPEEDPRK. The span at 597–615 shows a compositional bias: low complexity; sequence AAVAAAIARVKAKKAAQAQ. A compositionally biased stretch (basic and acidic residues) spans 619–634; the sequence is EPVKSESEAPEEDPRK. A compositionally biased stretch (low complexity) spans 635–653; sequence AAVAAAIARVKAKKAAQAQ. The span at 657–672 shows a compositional bias: basic and acidic residues; that stretch reads EPVKSESEAPEEDPRK.

The protein belongs to the 4Fe4S bacterial-type ferredoxin family. RnfC subfamily. The complex is composed of six subunits: RnfA, RnfB, RnfC, RnfD, RnfE and RnfG. [4Fe-4S] cluster serves as cofactor.

It is found in the cell inner membrane. Its function is as follows. Part of a membrane-bound complex that couples electron transfer with translocation of ions across the membrane. This is Ion-translocating oxidoreductase complex subunit C from Yersinia enterocolitica serotype O:8 / biotype 1B (strain NCTC 13174 / 8081).